The chain runs to 227 residues: MARGIFITATGTDIGKTYVTALIIKRLRETNINCGYYKAALSGAERRDGKLIAGDANYVYNIANIKGDPNDAVSYIFQQAVSPHLAAKLNNVEISMERIKKDFYSIKNKYDYITVEGSGGIVCPISTGKEKIMLDNIIKIFKLPAIVVADAGLGTINSTILTLQYMKEKNISVKMILLNNYNHEDIIHIENKRYLSDNLLIPVYTCNKNANKLEIPVEKLIEIYEEI.

13-18 (DIGKTY) is a binding site for ATP. Residue Thr-17 participates in Mg(2+) binding. The active site involves Lys-38. Ser-42 contributes to the substrate binding site. ATP contacts are provided by residues Asp-55, 116–119 (EGSG), and 179–180 (NN). Mg(2+)-binding residues include Asp-55 and Glu-116.

This sequence belongs to the dethiobiotin synthetase family. As to quaternary structure, homodimer. The cofactor is Mg(2+).

It is found in the cytoplasm. The catalysed reaction is (7R,8S)-7,8-diammoniononanoate + CO2 + ATP = (4R,5S)-dethiobiotin + ADP + phosphate + 3 H(+). The protein operates within cofactor biosynthesis; biotin biosynthesis; biotin from 7,8-diaminononanoate: step 1/2. In terms of biological role, catalyzes a mechanistically unusual reaction, the ATP-dependent insertion of CO2 between the N7 and N8 nitrogen atoms of 7,8-diaminopelargonic acid (DAPA, also called 7,8-diammoniononanoate) to form a ureido ring. In Clostridium botulinum (strain Langeland / NCTC 10281 / Type F), this protein is ATP-dependent dethiobiotin synthetase BioD.